Consider the following 517-residue polypeptide: UDP-N-acetylmuramoyl-L-alanyl-D-glutamate--2,6-diaminopimelate ligase (517 aa).

L34 and S36 together coordinate UDP-N-acetyl-alpha-D-muramoyl-L-alanyl-D-glutamate. 122–128 (GTSGKTT) contacts ATP. UDP-N-acetyl-alpha-D-muramoyl-L-alanyl-D-glutamate contacts are provided by residues 164 to 165 (TT), S191, and R199. K231 carries the post-translational modification N6-carboxylysine. Residues R394, 418–421 (DNPR), G476, and E480 each bind meso-2,6-diaminopimelate. The Meso-diaminopimelate recognition motif motif lies at 418 to 421 (DNPR).

This sequence belongs to the MurCDEF family. MurE subfamily. Mg(2+) is required as a cofactor. Carboxylation is probably crucial for Mg(2+) binding and, consequently, for the gamma-phosphate positioning of ATP.

It localises to the cytoplasm. It catalyses the reaction UDP-N-acetyl-alpha-D-muramoyl-L-alanyl-D-glutamate + meso-2,6-diaminopimelate + ATP = UDP-N-acetyl-alpha-D-muramoyl-L-alanyl-gamma-D-glutamyl-meso-2,6-diaminopimelate + ADP + phosphate + H(+). It participates in cell wall biogenesis; peptidoglycan biosynthesis. Functionally, catalyzes the addition of meso-diaminopimelic acid to the nucleotide precursor UDP-N-acetylmuramoyl-L-alanyl-D-glutamate (UMAG) in the biosynthesis of bacterial cell-wall peptidoglycan. The protein is UDP-N-acetylmuramoyl-L-alanyl-D-glutamate--2,6-diaminopimelate ligase of Corynebacterium glutamicum (strain ATCC 13032 / DSM 20300 / JCM 1318 / BCRC 11384 / CCUG 27702 / LMG 3730 / NBRC 12168 / NCIMB 10025 / NRRL B-2784 / 534).